A 98-amino-acid chain; its full sequence is Co-chaperonin GroES (98 aa).

Belongs to the GroES chaperonin family. In terms of assembly, heptamer of 7 subunits arranged in a ring. Interacts with the chaperonin GroEL.

Its subcellular location is the cytoplasm. Together with the chaperonin GroEL, plays an essential role in assisting protein folding. The GroEL-GroES system forms a nano-cage that allows encapsulation of the non-native substrate proteins and provides a physical environment optimized to promote and accelerate protein folding. GroES binds to the apical surface of the GroEL ring, thereby capping the opening of the GroEL channel. The polypeptide is Co-chaperonin GroES (Bartonella tribocorum (strain CIP 105476 / IBS 506)).